Reading from the N-terminus, the 126-residue chain is Fatty acid-binding protein 10-A, liver basic (126 aa).

4 residues coordinate cholate: Lys-57, Lys-77, His-99, and Gln-101.

This sequence belongs to the calycin superfamily. Fatty-acid binding protein (FABP) family. As to expression, expressed in the developing embryonic liver from 48 hpf. Also expressed in the liver of 5-day-old larvae. In adults, primarily expressed in the liver, with weak expression in the testis and intestine.

The protein resides in the cytoplasm. In terms of biological role, binds hydrophobic ligands, such as cholate, in the cytoplasm. May be involved in intracellular lipid transport. Binds one cholate per subunit. The chain is Fatty acid-binding protein 10-A, liver basic (fabp10a) from Danio rerio (Zebrafish).